We begin with the raw amino-acid sequence, 80 residues long: Small ribosomal subunit protein uS17 (80 aa).

This sequence belongs to the universal ribosomal protein uS17 family. Part of the 30S ribosomal subunit.

Functionally, one of the primary rRNA binding proteins, it binds specifically to the 5'-end of 16S ribosomal RNA. The chain is Small ribosomal subunit protein uS17 from Brucella suis (strain ATCC 23445 / NCTC 10510).